Here is a 1129-residue protein sequence, read N- to C-terminus: Stress response protein nst1 (1129 aa).

5 disordered regions span residues M1–T136, N229–A307, N361–M413, M453–D879, and N903–S937. Residues A14–P54 show a composition bias toward polar residues. The span at S72 to P85 shows a compositional bias: basic and acidic residues. Residues S89–R101 show a composition bias toward basic residues. Composition is skewed to polar residues over residues G103–M122 and G254–F263. Composition is skewed to acidic residues over residues T274–E304 and D379–T408. Residues A441–T608 are a coiled coil. 2 stretches are compositionally biased toward basic and acidic residues: residues M453–R473 and Q482–R613. Over residues L626–Q673 the composition is skewed to low complexity. Positions A674–P685 are enriched in polar residues. A compositionally biased stretch (low complexity) spans S687–S701. The segment covering T718 to R728 has biased composition (polar residues). A compositionally biased stretch (pro residues) spans S741–P754. Residues T865 to A875 are compositionally biased toward polar residues.

This sequence belongs to the NST1 family.

It is found in the cytoplasm. Its function is as follows. May act as a negative regulator of salt tolerance. In Aspergillus terreus (strain NIH 2624 / FGSC A1156), this protein is Stress response protein nst1 (nst1).